The sequence spans 176 residues: RNA pyrophosphohydrolase (176 aa).

Residues 6 to 149 (GYRPNVGIVI…KRDVYRRVMK (144 aa)) enclose the Nudix hydrolase domain. Residues 38-59 (GGINPGESAEQAMYRELFEEVG) carry the Nudix box motif.

It belongs to the Nudix hydrolase family. RppH subfamily. A divalent metal cation is required as a cofactor.

Accelerates the degradation of transcripts by removing pyrophosphate from the 5'-end of triphosphorylated RNA, leading to a more labile monophosphorylated state that can stimulate subsequent ribonuclease cleavage. In Salmonella paratyphi C (strain RKS4594), this protein is RNA pyrophosphohydrolase.